A 463-amino-acid polypeptide reads, in one-letter code: Glutamate--tRNA ligase 2 (463 aa).

Positions 10 to 20 (PSPTGYLHIGG) match the 'HIGH' region motif. Residues 238–242 (KLSKR) carry the 'KMSKS' region motif. Residue lysine 241 participates in ATP binding.

This sequence belongs to the class-I aminoacyl-tRNA synthetase family. Glutamate--tRNA ligase type 1 subfamily. Monomer.

It localises to the cytoplasm. It carries out the reaction tRNA(Glu) + L-glutamate + ATP = L-glutamyl-tRNA(Glu) + AMP + diphosphate. In terms of biological role, catalyzes the attachment of glutamate to tRNA(Glu) in a two-step reaction: glutamate is first activated by ATP to form Glu-AMP and then transferred to the acceptor end of tRNA(Glu). This is Glutamate--tRNA ligase 2 from Helicobacter acinonychis (strain Sheeba).